The chain runs to 313 residues: Tyrosine recombinase slr0733 (313 aa).

The 95-residue stretch at 7–101 folds into the Core-binding (CB) domain; it reads NNLSGLNQNI…AIKSLVNYAR (95 aa). The Tyr recombinase domain occupies 122 to 307; it reads RDTTGVSPTS…RHQHQAQITD (186 aa). Residues arginine 162, lysine 188, histidine 258, arginine 261, and histidine 285 contribute to the active site. The active-site O-(3'-phospho-DNA)-tyrosine intermediate is tyrosine 294.

Belongs to the 'phage' integrase family.

The protein localises to the cytoplasm. Site-specific tyrosine recombinase, which acts by catalyzing the cutting and rejoining of the recombining DNA molecules. In Synechocystis sp. (strain ATCC 27184 / PCC 6803 / Kazusa), this protein is Tyrosine recombinase slr0733.